A 102-amino-acid chain; its full sequence is Large ribosomal subunit protein bL21 (102 aa).

Belongs to the bacterial ribosomal protein bL21 family. Part of the 50S ribosomal subunit. Contacts protein L20.

Functionally, this protein binds to 23S rRNA in the presence of protein L20. This is Large ribosomal subunit protein bL21 from Campylobacter hominis (strain ATCC BAA-381 / DSM 21671 / CCUG 45161 / LMG 19568 / NCTC 13146 / CH001A).